Reading from the N-terminus, the 248-residue chain is UPF0736 protein BCG9842_B4111 (248 aa).

Belongs to the UPF0736 family.

The chain is UPF0736 protein BCG9842_B4111 from Bacillus cereus (strain G9842).